The primary structure comprises 547 residues: Probable protein kinase UbiB (547 aa).

Residues 121-501 (EFSPDPMASA…QLRSERRWRR (381 aa)) form the Protein kinase domain. Residues 127–135 (MASASVAQV) and Lys149 each bind ATP. The active-site Proton acceptor is Asp284. Helical transmembrane passes span 502-522 (GFIA…HAGQ) and 523-543 (WLAD…GVML).

This sequence belongs to the ABC1 family. UbiB subfamily.

The protein localises to the cell inner membrane. Its pathway is cofactor biosynthesis; ubiquinone biosynthesis [regulation]. Functionally, is probably a protein kinase regulator of UbiI activity which is involved in aerobic coenzyme Q (ubiquinone) biosynthesis. The protein is Probable protein kinase UbiB of Marinobacter nauticus (strain ATCC 700491 / DSM 11845 / VT8) (Marinobacter aquaeolei).